The primary structure comprises 259 residues: tRNA-cytidine(32) 2-sulfurtransferase (259 aa).

The PP-loop motif signature appears at 37–42 (SGGKDS). [4Fe-4S] cluster contacts are provided by Cys-112, Cys-115, and Cys-202.

It belongs to the TtcA family. Homodimer. Mg(2+) serves as cofactor. Requires [4Fe-4S] cluster as cofactor.

The protein resides in the cytoplasm. The enzyme catalyses cytidine(32) in tRNA + S-sulfanyl-L-cysteinyl-[cysteine desulfurase] + AH2 + ATP = 2-thiocytidine(32) in tRNA + L-cysteinyl-[cysteine desulfurase] + A + AMP + diphosphate + H(+). It participates in tRNA modification. Its function is as follows. Catalyzes the ATP-dependent 2-thiolation of cytidine in position 32 of tRNA, to form 2-thiocytidine (s(2)C32). The sulfur atoms are provided by the cysteine/cysteine desulfurase (IscS) system. The sequence is that of tRNA-cytidine(32) 2-sulfurtransferase from Syntrophotalea carbinolica (strain DSM 2380 / NBRC 103641 / GraBd1) (Pelobacter carbinolicus).